The chain runs to 154 residues: Large ribosomal subunit protein uL30 (154 aa).

This sequence belongs to the universal ribosomal protein uL30 family. In terms of assembly, part of the 50S ribosomal subunit.

The chain is Large ribosomal subunit protein uL30 from Methanococcus vannielii.